A 341-amino-acid chain; its full sequence is Cyclic GMP-AMP synthase (341 aa).

Ser-56 serves as a coordination point for ATP. Active-site residues include Asp-71 and Asp-73. Residue Asp-73 participates in Mg(2+) binding. Asn-109 contributes to the ATP binding site. The active site involves Asp-123. Mg(2+) is bound at residue Asp-123. Residues Leu-192 and Asp-238 each coordinate ATP.

Belongs to the CD-NTase family. B04 subfamily. Monomer. It depends on Mg(2+) as a cofactor.

The enzyme catalyses GTP + ATP = 3',3'-cGAMP + 2 diphosphate. Its function is as follows. Cyclic nucleotide synthase (second messenger synthase) of a CBASS antivirus system. CBASS (cyclic oligonucleotide-based antiphage signaling system) provides immunity against bacteriophage. The CD-NTase protein synthesizes cyclic nucleotides in response to infection; these serve as specific second messenger signals. The signals activate a diverse range of effectors, leading to bacterial cell death and thus abortive phage infection. A type II-A(GA) CBASS system. Functionally, catalyzes the synthesis of 3'3'-cyclic GMP-AMP (3'3'-cGAMP) from GTP and ATP, a second messenger in cell signal transduction. May make another product. Controls the activity of the CBASS cGAMP-activated phospholipase effector protein. This Bacteroides fragilis protein is Cyclic GMP-AMP synthase.